The chain runs to 892 residues: Putative leucine-rich repeat receptor-like serine/threonine-protein kinase At2g04300 (892 aa).

The N-terminal stretch at 1–26 (MKTHPQAILLCVLFFITFGLLHVVEA) is a signal peptide. At 27-523 (GNQEGFISLD…GAKKKNVVVL (497 aa)) the chain is on the extracellular side. 5 N-linked (GlcNAc...) asparagine glycosylation sites follow: N99, N186, N241, N267, and N294. LRR repeat units lie at residues 375–396 (IKNIQNTYGVSKTSWQGDPCVP), 399–422 (FMWDGLNCNNSYISTPPTITFLNL), 423–444 (SSSHLTGIIASAIQNLTHLQNL), and 447–467 (SNNNLTGGVPEFLAGLKSLLV). 5 N-linked (GlcNAc...) asparagine glycosylation sites follow: N407, N421, N437, N450, and N469. Residues 524-544 (VVVSIALVVVLGSALALFLVF) form a helical membrane-spanning segment. Residues 545-892 (RKRKTPRNEV…FGTEYTPEAR (348 aa)) are Cytoplasmic-facing. A Phosphothreonine modification is found at T573. The Protein kinase domain occupies 582–855 (NNFEKILGKG…QVVIELNECL (274 aa)). ATP is bound by residues 588–596 (LGKGGFGMV) and K610. At Y655 the chain carries Phosphotyrosine. Catalysis depends on D707, which acts as the Proton acceptor. Residues T742 and T747 each carry the phosphothreonine modification. Phosphotyrosine is present on Y755.

This sequence belongs to the protein kinase superfamily. Ser/Thr protein kinase family.

Its subcellular location is the cell membrane. It carries out the reaction L-seryl-[protein] + ATP = O-phospho-L-seryl-[protein] + ADP + H(+). The enzyme catalyses L-threonyl-[protein] + ATP = O-phospho-L-threonyl-[protein] + ADP + H(+). The polypeptide is Putative leucine-rich repeat receptor-like serine/threonine-protein kinase At2g04300 (Arabidopsis thaliana (Mouse-ear cress)).